The primary structure comprises 843 residues: Glycogen phosphorylase, brain form (843 aa).

N-acetylalanine is present on Ala-2. A Phosphoserine; by PHK; in form phosphorylase A modification is found at Ser-15. The AMP site is built by Asp-43, Tyr-197, and Arg-310. Tyr-197 bears the Phosphotyrosine mark. Tyr-473 is subject to Phosphotyrosine. Residue Lys-569 coordinates pyridoxal 5'-phosphate. A pyridoxal 5'-phosphate region spans residues Thr-677 to Gly-678. Lys-681 is subject to N6-(pyridoxal phosphate)lysine.

Belongs to the glycogen phosphorylase family. Homodimer. Dimers associate into a tetramer to form the enzymatically active phosphorylase A. Pyridoxal 5'-phosphate serves as cofactor. Post-translationally, phosphorylation of Ser-15 converts phosphorylase B (unphosphorylated) to phosphorylase A.

It catalyses the reaction [(1-&gt;4)-alpha-D-glucosyl](n) + phosphate = [(1-&gt;4)-alpha-D-glucosyl](n-1) + alpha-D-glucose 1-phosphate. Activity of phosphorylase is controlled both by allosteric means (through the non-covalent binding of metabolites) and by covalent modification. Thus AMP allosterically activates, whereas ATP, ADP, and glucose-6-phosphate allosterically inhibit, phosphorylase B. Functionally, glycogen phosphorylase that regulates glycogen mobilization. Phosphorylase is an important allosteric enzyme in carbohydrate metabolism. Enzymes from different sources differ in their regulatory mechanisms and in their natural substrates. However, all known phosphorylases share catalytic and structural properties. The protein is Glycogen phosphorylase, brain form (PYGB) of Bos taurus (Bovine).